Consider the following 357-residue polypeptide: DNA replication and repair protein RecF (357 aa).

ATP is bound at residue 30–37; the sequence is GANGSGKT.

The protein belongs to the RecF family.

The protein localises to the cytoplasm. In terms of biological role, the RecF protein is involved in DNA metabolism; it is required for DNA replication and normal SOS inducibility. RecF binds preferentially to single-stranded, linear DNA. It also seems to bind ATP. The polypeptide is DNA replication and repair protein RecF (Escherichia coli O7:K1 (strain IAI39 / ExPEC)).